Reading from the N-terminus, the 215-residue chain is Uracil phosphoribosyltransferase (215 aa).

5-phospho-alpha-D-ribose 1-diphosphate-binding positions include Arg-77, Arg-102, and 129 to 137 (DPMLATGGS). Residues Ile-193 and 198 to 200 (GDA) contribute to the uracil site. Asp-199 is a binding site for 5-phospho-alpha-D-ribose 1-diphosphate.

It belongs to the UPRTase family. Requires Mg(2+) as cofactor.

The catalysed reaction is UMP + diphosphate = 5-phospho-alpha-D-ribose 1-diphosphate + uracil. It functions in the pathway pyrimidine metabolism; UMP biosynthesis via salvage pathway; UMP from uracil: step 1/1. Its activity is regulated as follows. Allosterically activated by GTP. In terms of biological role, catalyzes the conversion of uracil and 5-phospho-alpha-D-ribose 1-diphosphate (PRPP) to UMP and diphosphate. This Corynebacterium urealyticum (strain ATCC 43042 / DSM 7109) protein is Uracil phosphoribosyltransferase.